A 277-amino-acid polypeptide reads, in one-letter code: MPDTLKVADVTFGGNHPVALIAGPCVMENEAHTLAIARQLLEVKNELGVGVVFKASFDKANRTSVSAYRGPGLESGLRILDKVRQQTGLPIVSDIHDVSQVEAAAEVLDILQIPAFLCRQTDLLLAAGRSGKVVNIKKGQFLAPWDMANAVAKVASTGNDRILLTERGTSFGYNNLVVDMRSLAVMRELGCPVVFDATHAVQLPGGAGTSSGGQRQFVAALSRAAVAVGVDGLFWEVHPDPDRALCDGANSLPLDQVKKTLKEMMAIDAIVKGNTES.

This sequence belongs to the KdsA family.

The protein localises to the cytoplasm. It catalyses the reaction D-arabinose 5-phosphate + phosphoenolpyruvate + H2O = 3-deoxy-alpha-D-manno-2-octulosonate-8-phosphate + phosphate. Its pathway is carbohydrate biosynthesis; 3-deoxy-D-manno-octulosonate biosynthesis; 3-deoxy-D-manno-octulosonate from D-ribulose 5-phosphate: step 2/3. The protein operates within bacterial outer membrane biogenesis; lipopolysaccharide biosynthesis. This Syntrophotalea carbinolica (strain DSM 2380 / NBRC 103641 / GraBd1) (Pelobacter carbinolicus) protein is 2-dehydro-3-deoxyphosphooctonate aldolase.